Here is a 761-residue protein sequence, read N- to C-terminus: Membrane protein of ER body-like protein (761 aa).

2 disordered regions span residues 1 to 85 and 120 to 162; these read MGSA…GEHT and GSES…RSRE. Acidic residues predominate over residues 22 to 31; that stretch reads EVEEDDEQIV. Low complexity predominate over residues 48 to 65; it reads VDSSTITNTSSSSSSSFS. Basic and acidic residues predominate over residues 74 to 85; that stretch reads PDFHSNGDGEHT. The segment covering 136 to 154 has biased composition (polar residues); it reads TADLNGEQTQLEPENGSTS. A coiled-coil region spans residues 186-206; it reads IEEEVDFEDVEYHDVENMMDK. 2 disordered regions span residues 338 to 374 and 416 to 448; these read SSSVLEANPPPRESIVPVVNPSRGNLSPMRKDTTGSA and QTQQKIDNDDSSTADGNHTSDKGRLSPIQPSHG. Positions 416 to 432 are enriched in polar residues; it reads QTQQKIDNDDSSTADGN. 5 consecutive transmembrane segments (helical) span residues 549–569, 573–593, 640–660, 670–690, and 702–722; these read IVYGGLLEAITSLGVISSAAG, SMLNILVLGLANLLGGLILII, VAILSFIITGILPPVVYYFSF, VASVFGASLFCIVLLAIAKAH, and ILYYGSIAVSVSGISYVVGNF.

Belongs to the CCC1 family.

It is found in the endoplasmic reticulum membrane. Its function is as follows. Not essential for the accumulation of ER body components, including PYK10. This Arabidopsis thaliana (Mouse-ear cress) protein is Membrane protein of ER body-like protein (MEBL).